Here is a 140-residue protein sequence, read N- to C-terminus: NTF2-related export protein 1 (140 aa).

Residue alanine 2 is modified to N-acetylalanine. One can recognise an NTF2 domain in the interval 16–135 (AAEEFVNVYY…WKIASDCFRF (120 aa)).

Heterodimer with NXF1. Forms a complex with RANGAP1, RANBP2/NUP358 and NXF1. Interacts (via NTF2 domain) with NXF1. Stabilizes the NTF2 domain of NXF1 by heterodimerization. The formation of NXF1-NXT1 heterodimers is required for the NXF1-mediated nuclear mRNA export. Preferentially binds Ran-GTP. Associates with NXF2, NXF3 and NXF5. Does not bind nucleoporins (NPC) directly, its association to NPC is mediated by NXF1.

It is found in the nucleus. Its subcellular location is the nucleus speckle. It localises to the cytoplasm. Functionally, stimulator of protein export for NES-containing proteins. Also plays a role in the nuclear export of U1 snRNA, tRNA, and mRNA. The NXF1-NXT1 heterodimer is involved in the export of HSP70 mRNA in conjunction with ALYREF/THOC4 and THOC5. In Bos taurus (Bovine), this protein is NTF2-related export protein 1 (NXT1).